Reading from the N-terminus, the 201-residue chain is ATP-dependent Clp protease proteolytic subunit (201 aa).

The active-site Nucleophile is Ser-97. The active site involves His-122.

This sequence belongs to the peptidase S14 family. Fourteen ClpP subunits assemble into 2 heptameric rings which stack back to back to give a disk-like structure with a central cavity, resembling the structure of eukaryotic proteasomes.

The protein localises to the cytoplasm. It carries out the reaction Hydrolysis of proteins to small peptides in the presence of ATP and magnesium. alpha-casein is the usual test substrate. In the absence of ATP, only oligopeptides shorter than five residues are hydrolyzed (such as succinyl-Leu-Tyr-|-NHMec, and Leu-Tyr-Leu-|-Tyr-Trp, in which cleavage of the -Tyr-|-Leu- and -Tyr-|-Trp bonds also occurs).. Its function is as follows. Cleaves peptides in various proteins in a process that requires ATP hydrolysis. Has a chymotrypsin-like activity. Plays a major role in the degradation of misfolded proteins. The protein is ATP-dependent Clp protease proteolytic subunit of Nitratidesulfovibrio vulgaris (strain ATCC 29579 / DSM 644 / CCUG 34227 / NCIMB 8303 / VKM B-1760 / Hildenborough) (Desulfovibrio vulgaris).